We begin with the raw amino-acid sequence, 3289 residues long: tRNA nuclease CdiA (3289 aa).

Residues 1-32 (MHQPPVRFTYRLLSYLISTIIAGQPLLPAVGA) form the signal peptide. The two-partner system transport domain (TPS) stretch occupies residues 36–322 (PQNGAGMDKA…AGGNLSVSSR (287 aa)). Positions 351–1398 (EKLTAGRDVT…IVVRTGHLLN (1048 aa)) are FHA-1. The disordered stretch occupies residues 595–615 (AVNASEKLTHSGKSSAPSLSL). The tract at residues 1399-1689 (QREGFSATTT…LTGQTGISDD (291 aa)) is receptor binding domain (RBD). Residues 1690–1874 (WPLPSGNNGY…LSPEDITLHN (185 aa)) are YP domain. A periplasmic FHA-1 repeat (pFR) region spans residues 1875 to 1935 (GSVISGNNVQ…DLSAIGDISN (61 aa)). The interval 1979-2653 (TDTGPVATIK…TSKYDSKQTS (675 aa)) is FHA-2. Basic and acidic residues predominate over residues 2097–2113 (RESKNSRNGRSESHESH). 3 disordered regions span residues 2097–2116 (RESKNSRNGRSESHESHAAV), 2332–2356 (GSSKTTHDRREAGTTQSQSASTIGS), and 2466–2513 (TGDP…TGKN). Polar residues-rich tracts occupy residues 2344–2356 (GTTQSQSASTIGS) and 2472–2507 (TGVSLSLTTQKSKSQQHSESDTVSGSTLNAGNNLSV). The segment at 2992 to 3034 (SDLSEEQKQTISTLATVSAGLAGGLTGNSTASAAVGAQSGKNA) is pretoxin (PT) domain. The VENN CT cleavage motif signature appears at 3035-3038 (VENN). Positions 3035–3289 (VENNYLSVSE…VGHIQPVKVK (255 aa)) are C-terminal effector domain (CT); has tRNase activity. The segment at 3039-3197 (YLSVSEKTEL…PLIGQAASNK (159 aa)) is inner membrane translocation domain (IMTD), targets protein to PtsG.

In the N-terminal section; belongs to the CdiA toxin family. Forms a contact-dependent growth inhibition complex of CdiA-CT-NC101, CdiI-NC101 and EF-Tu; the complex is a dimer of heterotrimers. Stable CdiA-CT-NC101, EF-Tu complexes are not detected, nor are complexes with EF-Ts.

It is found in the secreted. The protein resides in the target cell. Its subcellular location is the target cell cytoplasm. In terms of biological role, toxic component of a toxin-immunity protein module, which functions as a cellular contact-dependent growth inhibition (CDI) system. CDI modules allow bacteria to communicate with and inhibit the growth of closely related neighboring bacteria in a contact-dependent fashion (target cell counts decrease about 10,0000-fold for this system). CdiA toxicity is neutralized by its cognate immunity protein CdiI-NC101, but not by CdiI from other bacteria. The C-terminal domain (CT) cleaves tRNA endonucleolytically at the 5' side of guanine discriminator nucleotide sites (removes the last 4 nucleotides of the tRNA acceptor arm when the first nucleotide to be removed is G). Requires EF-Ts (tsf) for toxic function of the CT domain in vivo. In vitro the CT tRNase activity requires both EF-Tu (tufA) and EF-Ts. EF-Ts probably increases steady-state GTP-EF-Tu-aa-tRNA substrate levels. The CT domain is thought to remodel this same complex to displace the 3'-end of the aa-tRNA and allow it to enter into the toxin active site. The CT domain gains access to the cytoplasm of target cells by using integral inner membrane protein PTS system glucose-specific EIICB component (ptsG). Its function is as follows. The CdiA protein is thought to be exported from the cell through the central lumen of CdiB, the other half of its two-partner system (TPS). The TPS domain probably remains associated with CdiB while the FHA-1 domain forms an extended filament with the receptor-binding domain (RBD) at its extremity; in the secretion arrested state the C-terminus of the RBD and YP domains form a hairpin-like structure as the FHA-2, PT and CT domains are periplasmic. The YP domain is probably responsible for this arrest at the point where it re-enters the host cell periplasm. Upon binding to a target cell outer membrane receptor a signal is transmitted to activate secretion. The filament elongates slightly, the rest of CdiA is secreted and the FHA-2 domain becomes stably associated with the target cell's outer membrane where it facilitates entry of the toxic CT domain into the target cell periplasm. From there the toxic CT domain is cleaved and gains access to the target cell cytoplasm via an inner membrane protein (PtsG for this CDI). This chain is tRNA nuclease CdiA, found in Escherichia coli (strain NC101).